The following is a 90-amino-acid chain: RNA-binding protein Hfq (90 aa).

A Sm domain is found at 9–69 (DRFLNHLRVN…ISTIIPSSYV (61 aa)).

Belongs to the Hfq family. As to quaternary structure, homohexamer.

RNA chaperone that binds small regulatory RNA (sRNAs) and mRNAs to facilitate mRNA translational regulation in response to envelope stress, environmental stress and changes in metabolite concentrations. Also binds with high specificity to tRNAs. The chain is RNA-binding protein Hfq from Thermotoga petrophila (strain ATCC BAA-488 / DSM 13995 / JCM 10881 / RKU-1).